The primary structure comprises 529 residues: O-acetylstemmadenine oxidase (529 aa).

The first 23 residues, 1-23 (MIKKVPIVLSIFCFLLLLSSSHG), serve as a signal peptide directing secretion. An intrachain disulfide couples cysteine 32 to cysteine 92. The N-linked (GlcNAc...) asparagine glycan is linked to asparagine 52. In terms of domain architecture, FAD-binding PCMH-type spans 70-244 (KSPKPLAIIT…VSWKVKLVKV (175 aa)). FAD contacts are provided by residues 102-108 (IRSGGAD), serine 113, 168-169 (VS), 173-177 (GIGGH), and phenylalanine 183. Residue asparagine 293 is glycosylated (N-linked (GlcNAc...) asparagine). Tryptophan 465 is an FAD binding site.

It belongs to the oxygen-dependent FAD-linked oxidoreductase family. The cofactor is FAD. In terms of tissue distribution, expressed in leaf epidermis.

The protein resides in the endoplasmic reticulum. It is found in the vacuole. Its subcellular location is the vesicle. The enzyme catalyses O-acetyl-15alpha-stemmadenine + O2 = precondylocarpine acetate + H2O2. Its pathway is alkaloid biosynthesis. Its function is as follows. Component of the seco-iridoid and derivatives monoterpenoid indole alkaloids (MIAs, e.g. vinblastine, catharanthine, tabersonine, vincadifformine, vindoline, vincristine, quinine and strychnine) biosynthesis pathway. Converts O-acetylstemmadenine (OAS) to reactive acetylated intermediates, likely dihydroprecondylocarpine acetate. This is O-acetylstemmadenine oxidase from Catharanthus roseus (Madagascar periwinkle).